A 260-amino-acid polypeptide reads, in one-letter code: tRNA pseudouridine synthase A (260 aa).

Residue Asp51 is the Nucleophile of the active site. Tyr109 serves as a coordination point for substrate.

This sequence belongs to the tRNA pseudouridine synthase TruA family. In terms of assembly, homodimer.

It catalyses the reaction uridine(38/39/40) in tRNA = pseudouridine(38/39/40) in tRNA. In terms of biological role, formation of pseudouridine at positions 38, 39 and 40 in the anticodon stem and loop of transfer RNAs. The protein is tRNA pseudouridine synthase A of Methylibium petroleiphilum (strain ATCC BAA-1232 / LMG 22953 / PM1).